Reading from the N-terminus, the 423-residue chain is Sulfate adenylyltransferase (423 aa).

It belongs to the sulfate adenylyltransferase family.

It catalyses the reaction sulfate + ATP + H(+) = adenosine 5'-phosphosulfate + diphosphate. It participates in sulfur metabolism; hydrogen sulfide biosynthesis; sulfite from sulfate: step 1/3. The protein is Sulfate adenylyltransferase of Desulfovibrio desulfuricans (strain ATCC 27774 / DSM 6949 / MB).